Reading from the N-terminus, the 344-residue chain is Arginine N-succinyltransferase (344 aa).

L125 contacts succinyl-CoA. The active-site Proton donor is the H229.

It belongs to the arginine N-succinyltransferase family.

The catalysed reaction is succinyl-CoA + L-arginine = N(2)-succinyl-L-arginine + CoA + H(+). The protein operates within amino-acid degradation; L-arginine degradation via AST pathway; L-glutamate and succinate from L-arginine: step 1/5. Catalyzes the transfer of succinyl-CoA to arginine to produce N(2)-succinylarginine. The polypeptide is Arginine N-succinyltransferase (Enterobacter sp. (strain 638)).